Here is a 330-residue protein sequence, read N- to C-terminus: MTLIVTGAAGFIGANLVKALNERGETRIIAVDNLTRADKFKNLVDCEIDDYLDKTEFVERFARGDFGKVRAVFHEGACSDTMETDGRYMMDNNFRYSRAVLDACLAQGAQFLYASSAAIYGGSSRFVEEREVEAPLNVYGYSKFLFDQVIRRVMPGAKSQIAGFRYFNVYGPRESHKGRMASVAFHNFNQFRAEGKVKLFGEYSGYGPGEQTRDFVSVEDVAKVNLYFFDHPEKSGIFNLGTGRAQPFNDIAATVVNTLRALEGQPALTLAEQVEQGLVEYVPFPDALRGKYQCFTQADQTKLRAAGYDAPFLTVQEGVDRYVRWLFGQL.

NADP(+) is bound by residues 11-12, 32-33, Lys39, Lys54, 75-79, and Asn92; these read FI, DN, and EGACS. The active-site Proton acceptor is the Tyr139. Lys143 is a binding site for NADP(+). Substrate is bound at residue Asn168. Residues Val169 and Lys177 each coordinate NADP(+). The Proton acceptor role is filled by Lys177. Residues Arg179, His186, 200–203, Arg213, and Tyr292 contribute to the substrate site; that span reads FGEY.

Belongs to the NAD(P)-dependent epimerase/dehydratase family. HldD subfamily. As to quaternary structure, homopentamer. Requires NADP(+) as cofactor.

The catalysed reaction is ADP-D-glycero-beta-D-manno-heptose = ADP-L-glycero-beta-D-manno-heptose. The protein operates within nucleotide-sugar biosynthesis; ADP-L-glycero-beta-D-manno-heptose biosynthesis; ADP-L-glycero-beta-D-manno-heptose from D-glycero-beta-D-manno-heptose 7-phosphate: step 4/4. Its function is as follows. Catalyzes the interconversion between ADP-D-glycero-beta-D-manno-heptose and ADP-L-glycero-beta-D-manno-heptose via an epimerization at carbon 6 of the heptose. The polypeptide is ADP-L-glycero-D-manno-heptose-6-epimerase (Burkholderia thailandensis (strain ATCC 700388 / DSM 13276 / CCUG 48851 / CIP 106301 / E264)).